The chain runs to 243 residues: Carboxy-S-adenosyl-L-methionine synthase (243 aa).

S-adenosyl-L-methionine-binding positions include Y40, G65–S67, D90–N91, D118–I119, N133, and R200.

Belongs to the class I-like SAM-binding methyltransferase superfamily. Cx-SAM synthase family. Homodimer.

The enzyme catalyses prephenate + S-adenosyl-L-methionine = carboxy-S-adenosyl-L-methionine + 3-phenylpyruvate + H2O. In terms of biological role, catalyzes the conversion of S-adenosyl-L-methionine (SAM) to carboxy-S-adenosyl-L-methionine (Cx-SAM). In Shewanella sp. (strain MR-7), this protein is Carboxy-S-adenosyl-L-methionine synthase.